The sequence spans 102 residues: Small ribosomal subunit protein uS10 (102 aa).

It belongs to the universal ribosomal protein uS10 family. Part of the 30S ribosomal subunit.

Involved in the binding of tRNA to the ribosomes. The sequence is that of Small ribosomal subunit protein uS10 from Bartonella henselae (strain ATCC 49882 / DSM 28221 / CCUG 30454 / Houston 1) (Rochalimaea henselae).